Here is a 104-residue protein sequence, read N- to C-terminus: Flagellar hook-basal body complex protein FliE (104 aa).

It belongs to the FliE family.

The protein resides in the bacterial flagellum basal body. In Salmonella heidelberg (strain SL476), this protein is Flagellar hook-basal body complex protein FliE.